The primary structure comprises 557 residues: Dihydroxy-acid dehydratase (557 aa).

Position 49 (Cys49) interacts with [2Fe-2S] cluster. Asp81 contacts Mg(2+). Position 122 (Cys122) interacts with [2Fe-2S] cluster. Mg(2+) is bound by residues Asp123 and Lys124. Lys124 carries the N6-carboxylysine modification. Cys194 contributes to the [2Fe-2S] cluster binding site. Glu446 lines the Mg(2+) pocket. The Proton acceptor role is filled by Ser472.

Belongs to the IlvD/Edd family. Homodimer. Requires [2Fe-2S] cluster as cofactor. The cofactor is Mg(2+).

It carries out the reaction (2R)-2,3-dihydroxy-3-methylbutanoate = 3-methyl-2-oxobutanoate + H2O. It catalyses the reaction (2R,3R)-2,3-dihydroxy-3-methylpentanoate = (S)-3-methyl-2-oxopentanoate + H2O. It functions in the pathway amino-acid biosynthesis; L-isoleucine biosynthesis; L-isoleucine from 2-oxobutanoate: step 3/4. Its pathway is amino-acid biosynthesis; L-valine biosynthesis; L-valine from pyruvate: step 3/4. Its function is as follows. Functions in the biosynthesis of branched-chain amino acids. Catalyzes the dehydration of (2R,3R)-2,3-dihydroxy-3-methylpentanoate (2,3-dihydroxy-3-methylvalerate) into 2-oxo-3-methylpentanoate (2-oxo-3-methylvalerate) and of (2R)-2,3-dihydroxy-3-methylbutanoate (2,3-dihydroxyisovalerate) into 2-oxo-3-methylbutanoate (2-oxoisovalerate), the penultimate precursor to L-isoleucine and L-valine, respectively. This is Dihydroxy-acid dehydratase from Prochlorococcus marinus (strain AS9601).